Reading from the N-terminus, the 621-residue chain is (-)-beta-phellandrene synthase 1, chloroplastic (621 aa).

The transit peptide at 1–49 (MALALVSVAPLVSMRRSLFSSPYELKSIDKTIPNLVMCRKRMLGRPSIR) directs the protein to the chloroplast. Positions 372, 376, and 524 each coordinate Mg(2+). The DDXXD motif signature appears at 372–376 (DDIYD).

This sequence belongs to the terpene synthase family. Tpsd subfamily. It depends on Mg(2+) as a cofactor. Requires Mn(2+) as cofactor.

It localises to the plastid. Its subcellular location is the chloroplast. It carries out the reaction (2E)-geranyl diphosphate = (-)-beta-phellandrene + diphosphate. The protein operates within terpene metabolism; oleoresin biosynthesis. It functions in the pathway secondary metabolite biosynthesis; terpenoid biosynthesis. Its function is as follows. Monoterpene synthase (TPS) involved in the biosynthesis of monoterpene natural products included in conifer oleoresin secretions and volatile emissions; these compounds contribute to biotic and abiotic stress defense against herbivores and pathogens. Catalyzes the conversion of (2E)-geranyl diphosphate (GPP) to (-)-beta-phellandrene. The sequence is that of (-)-beta-phellandrene synthase 1, chloroplastic from Pinus banksiana (Jack pine).